The following is a 991-amino-acid chain: MRTFIKSHRRSSSLEACPPKTTPKRNSTGSPTELQPPVFPPSAPRQSSSFESLQKLTSGKLFSTKLFKKSGAQKLPATPDLPAFPRGYDSRSPSCEWRALGTEVALEDIPAIKGTRTHEWGENSDVSNSVIVLNRNSISSDGSYVETRDEQSPWRLARRSLDSATQTLSSTEEYSGPEIRIRSSTPHKLREASDSFLKKRWNRQARIHSKADIAKLEGSFPMPVEAISPPFARRRSSERSQCLGASGTMEQQLNPVNPEKCSLYAACSERSQSLTKATHALVATASTEVGLQNNLNSASVELRDDLENERESLSEEDSGSSFSDDSSKFSFEVGGGINGRTSSVKYYSKPDPPMRNYIDDLFEDEDFDEDMNCYDDDQEYEEDTEHLFGASHVQLEHGYSMMHEVTDSDSEQETKSNISSVLSKGQNAIFPSSDGRFVLNSGDSNGGSNQENIGVKMLEKSISNIGLEDVEDVEDDSDGIIPTDTQEDIDSPVHSQPSHANFSHIKKYSDIFGISDSDEDTANNSSSQYPFEEGYYSSDEEPTLRAEPAANTEDGFTDALKASFKQDESSHSSTDSIDKTPTFALDTDGEYFPPTLTLNKKSEVDDLDVSEEAAPESISLSTSDLEQPADAKQDRANIISSSIMDYAIHEVATTESVESDENQTTCVPQTTRVPSKVTKYADLFNLSDENDEDGSDGEFLDDMGFNELESTPVESKKPNIPPRRLGNEYFGNFHSPVASSHNAPAVPRQHSPLSAKVILPATENTSIKSQYAVPRMGQSPLPPPARSQTLKFHDLHSSLDGEIRGTMSNLFFIDESEEDQYYQVQSKVDDDYLDEINNVPEDFNFSDNDSDTCSGKSPMFPTGLRNSFRKTRSFSEKPTGLAKEPTPTRYKLDIKNKTVTFFKNGLSRPLSEGSLHGQSIPSRAHVPPLSLRKAMSEGSLEQSAHSPLGYGSLAFGLNSLKSPEMSRTDAYGLSPIQEAISSGDASPKLVN.

The span at 1–11 (MRTFIKSHRRS) shows a compositional bias: basic residues. Disordered regions lie at residues 1–51 (MRTF…SSFE), 68–92 (KKSG…DSRS), 165–192 (TQTL…LREA), 306–327 (LENE…DDSS), 516–546 (DSDE…TLRA), 564–588 (FKQD…LDTD), 603–631 (EVDD…PADA), and 847–866 (DNDS…GLRN). Residues 24–33 (KRNSTGSPTE) are compositionally biased toward polar residues. The span at 605–614 (DDLDVSEEAA) shows a compositional bias: acidic residues.

Belongs to the ZRG8 family.

It is found in the cytoplasm. The protein resides in the bud. It localises to the bud neck. Its subcellular location is the bud tip. In terms of biological role, involved in maintenance of polarized growth and daughter-cell-specific transcription. The sequence is that of Zinc-regulated protein 8 (ZRG8) from Eremothecium gossypii (strain ATCC 10895 / CBS 109.51 / FGSC 9923 / NRRL Y-1056) (Yeast).